We begin with the raw amino-acid sequence, 1073 residues long: Carbamoyl phosphate synthase large chain (1073 aa).

The segment at Pro-2–Glu-403 is carboxyphosphate synthetic domain. Residues Arg-129, Arg-169, Gly-175, Gly-176, Glu-208, Leu-210, Glu-215, Gly-241, Ile-242, His-243, Gln-285, and Glu-299 each coordinate ATP. Residues Asp-133–Val-328 form the ATP-grasp 1 domain. Gln-285, Glu-299, and Asn-301 together coordinate Mg(2+). 3 residues coordinate Mn(2+): Gln-285, Glu-299, and Asn-301. An oligomerization domain region spans residues Val-404 to Ala-553. Residues Asn-554–Asn-936 are carbamoyl phosphate synthetic domain. The ATP-grasp 2 domain occupies Gln-679–Ala-870. Residues Arg-715, His-754, Leu-756, Glu-761, Gly-786, Val-787, His-788, Ser-789, Gln-829, and Glu-841 each coordinate ATP. The Mg(2+) site is built by Gln-829, Glu-841, and Asn-843. Gln-829, Glu-841, and Asn-843 together coordinate Mn(2+). The 137-residue stretch at Ser-937 to Lys-1073 folds into the MGS-like domain. The segment at Ser-937–Lys-1073 is allosteric domain.

Belongs to the CarB family. In terms of assembly, composed of two chains; the small (or glutamine) chain promotes the hydrolysis of glutamine to ammonia, which is used by the large (or ammonia) chain to synthesize carbamoyl phosphate. Tetramer of heterodimers (alpha,beta)4. Requires Mg(2+) as cofactor. The cofactor is Mn(2+).

It carries out the reaction hydrogencarbonate + L-glutamine + 2 ATP + H2O = carbamoyl phosphate + L-glutamate + 2 ADP + phosphate + 2 H(+). The enzyme catalyses hydrogencarbonate + NH4(+) + 2 ATP = carbamoyl phosphate + 2 ADP + phosphate + 2 H(+). It functions in the pathway amino-acid biosynthesis; L-arginine biosynthesis; carbamoyl phosphate from bicarbonate: step 1/1. It participates in pyrimidine metabolism; UMP biosynthesis via de novo pathway; (S)-dihydroorotate from bicarbonate: step 1/3. Large subunit of the glutamine-dependent carbamoyl phosphate synthetase (CPSase). CPSase catalyzes the formation of carbamoyl phosphate from the ammonia moiety of glutamine, carbonate, and phosphate donated by ATP, constituting the first step of 2 biosynthetic pathways, one leading to arginine and/or urea and the other to pyrimidine nucleotides. The large subunit (synthetase) binds the substrates ammonia (free or transferred from glutamine from the small subunit), hydrogencarbonate and ATP and carries out an ATP-coupled ligase reaction, activating hydrogencarbonate by forming carboxy phosphate which reacts with ammonia to form carbamoyl phosphate. The chain is Carbamoyl phosphate synthase large chain from Escherichia coli O157:H7.